A 683-amino-acid polypeptide reads, in one-letter code: Dynein, 78 kDa intermediate chain, flagellar outer arm (683 aa).

A disordered region spans residues 1-42 (MPALSPAKKGTDKGKTGKKTGKQEQNAQDYIPPPPPMPGDEA). 4 WD repeats span residues 358–398 (HTES…DEPI), 407–450 (KLND…LIPE), 562–602 (DLND…LLPL), and 608–647 (VKKA…RITS).

The protein belongs to the dynein intermediate chain family. As to quaternary structure, consists of at least 3 heavy chains (alpha, beta and gamma), 2 intermediate chains and 8 light chains.

It is found in the cytoplasm. The protein resides in the cytoskeleton. It localises to the flagellum axoneme. In terms of biological role, is essential for arm assembly or attachment to the outer doublet microtubule. This chain is Dynein, 78 kDa intermediate chain, flagellar outer arm (ODA9), found in Chlamydomonas reinhardtii (Chlamydomonas smithii).